Here is a 180-residue protein sequence, read N- to C-terminus: NADH-quinone oxidoreductase subunit I (180 aa).

2 4Fe-4S ferredoxin-type domains span residues 50–80 (LTRD…LQKA) and 90–119 (EFFR…LTPD). 8 residues coordinate [4Fe-4S] cluster: Cys60, Cys63, Cys66, Cys70, Cys99, Cys102, Cys105, and Cys109.

This sequence belongs to the complex I 23 kDa subunit family. As to quaternary structure, NDH-1 is composed of 13 different subunits. Subunits NuoA, H, J, K, L, M, N constitute the membrane sector of the complex. [4Fe-4S] cluster serves as cofactor.

The protein localises to the cell inner membrane. The enzyme catalyses a quinone + NADH + 5 H(+)(in) = a quinol + NAD(+) + 4 H(+)(out). Functionally, NDH-1 shuttles electrons from NADH, via FMN and iron-sulfur (Fe-S) centers, to quinones in the respiratory chain. The immediate electron acceptor for the enzyme in this species is believed to be ubiquinone. Couples the redox reaction to proton translocation (for every two electrons transferred, four hydrogen ions are translocated across the cytoplasmic membrane), and thus conserves the redox energy in a proton gradient. This Yersinia enterocolitica serotype O:8 / biotype 1B (strain NCTC 13174 / 8081) protein is NADH-quinone oxidoreductase subunit I.